Here is a 424-residue protein sequence, read N- to C-terminus: MASSNLIKQLQERGLVAQVTDEEALAERLAQGPIALYCGFDPTADSLHLGHLVPLLCLKRFQQAGHKPVALVGGATGLIGDPSFKAAERKLNTEETVQEWVDKIRKQVAPFLDFDCGENSAIAANNYDWFGNMNVLTFLRDIGKHFSVNQMINKEAVKQRLNREDQGISFTEFSYNLLQGYDFACLNKQYGVVLQIGGSDQWGNITSGIDLTRRLHQNQVFGLTVPLITKADGTKFGKTEGGAVWLDPKKTSPYKFYQFWINTADADVYRFLKFFTFMSIEEINALEEEDKNSGKAPRAQYVLAEQVTRLVHGEDGLQAAKRITECLFSGSLSALSEADFEQLAQDGVPMVEMEKGADLMQALVDSELQPSRGQARKTIASNAITINGEKQSDPEYFFKEEDRLFGRFTLLRRGKKNYCLICWK.

Tyr37 contributes to the L-tyrosine binding site. A 'HIGH' region motif is present at residues 42–51 (PTADSLHLGH). N6-acetyllysine is present on Lys144. The L-tyrosine site is built by Tyr175 and Gln179. The short motif at 235 to 239 (KFGKT) is the 'KMSKS' region element. Lys238 serves as a coordination point for ATP. Residues 357-414 (ADLMQALVDSELQPSRGQARKTIASNAITINGEKQSDPEYFFKEEDRLFGRFTLLRRG) enclose the S4 RNA-binding domain.

Belongs to the class-I aminoacyl-tRNA synthetase family. TyrS type 1 subfamily. Homodimer.

It localises to the cytoplasm. The catalysed reaction is tRNA(Tyr) + L-tyrosine + ATP = L-tyrosyl-tRNA(Tyr) + AMP + diphosphate + H(+). Catalyzes the attachment of tyrosine to tRNA(Tyr) in a two-step reaction: tyrosine is first activated by ATP to form Tyr-AMP and then transferred to the acceptor end of tRNA(Tyr). The sequence is that of Tyrosine--tRNA ligase from Escherichia coli O127:H6 (strain E2348/69 / EPEC).